A 203-amino-acid chain; its full sequence is GTP cyclohydrolase-2 (203 aa).

49 to 53 lines the GTP pocket; sequence RIHSE. Residues C54, C65, and C67 each coordinate Zn(2+). Residues Q70, 92 to 94, and T114 contribute to the GTP site; that span reads EGR. Residue D126 is the Proton acceptor of the active site. R128 (nucleophile) is an active-site residue. The GTP site is built by T149 and K154.

The protein belongs to the GTP cyclohydrolase II family. It depends on Zn(2+) as a cofactor.

It carries out the reaction GTP + 4 H2O = 2,5-diamino-6-hydroxy-4-(5-phosphoribosylamino)-pyrimidine + formate + 2 phosphate + 3 H(+). Its pathway is cofactor biosynthesis; riboflavin biosynthesis; 5-amino-6-(D-ribitylamino)uracil from GTP: step 1/4. In terms of biological role, catalyzes the conversion of GTP to 2,5-diamino-6-ribosylamino-4(3H)-pyrimidinone 5'-phosphate (DARP), formate and pyrophosphate. This is GTP cyclohydrolase-2 from Shewanella sp. (strain W3-18-1).